We begin with the raw amino-acid sequence, 285 residues long: Involucrin (285 aa).

Disordered stretches follow at residues 1–93 (MSQQ…QEQK), 120–256 (LEQQ…AQVQ), and 266–285 (LPLIEQQHQKQEVHDPPEHQ). The segment covering 27–39 (IDTQQEQVKQPTS) has biased composition (polar residues). 3 stretches are compositionally biased toward low complexity: residues 72–87 (EQQCEPQEQEQQQKQQ), 120–129 (LEQQQEQQES), and 137–147 (EQCLEQQQEQQ). 3 stretches are compositionally biased toward basic and acidic residues: residues 149 to 165 (SQEKELHLEQEQQKEEL), 175 to 185 (EQCEKHQEAKN), and 200 to 233 (QQKEQLEQEKKLVDQHLDQEPAQRTEQPEKKEEQ). The span at 235–248 (LEQQGQQEGQLEQP) shows a compositional bias: low complexity. Residues 272–285 (QHQKQEVHDPPEHQ) are compositionally biased toward basic and acidic residues.

This sequence belongs to the involucrin family. In terms of assembly, directly or indirectly cross-linked to cornifelin (CNFN). In terms of processing, substrate of transglutaminase. Specific glutamines or lysines are cross-linked to keratins, desmoplakin and to inter involucrin molecules. As to expression, keratinocytes of epidermis and other stratified squamous epithelia.

Its subcellular location is the cytoplasm. In terms of biological role, part of the insoluble cornified cell envelope (CE) of stratified squamous epithelia. The chain is Involucrin (IVL) from Canis lupus familiaris (Dog).